The sequence spans 1031 residues: GTPase activating protein Gyp51 (1031 aa).

The span at 1-32 (MAFTEANEREVQSSYEKENVKIIREEEAKDQE) shows a compositional bias: basic and acidic residues. Disordered stretches follow at residues 1–229 (MAFT…TNVN), 278–317 (FIEQ…SQND), 339–371 (DHLP…DHKA), 420–459 (NDEL…PSHV), and 490–520 (KKNT…STSP). Residues 43-59 (TGTSPDLNFFSTQNVMQ) are compositionally biased toward polar residues. Positions 62–78 (FEDEYSEFSNEDDEAEI) are enriched in acidic residues. Residues 105-117 (SQQSVEEQNNTTN) show a composition bias toward polar residues. A compositionally biased stretch (basic and acidic residues) spans 195-217 (EDLKDEVKSVHEFNEPNDLRQQE). Over residues 219–229 (SYSDDDDTNVN) the composition is skewed to acidic residues. The segment covering 278–306 (FIEQNGPNSDTVSGFKETSSIVNSSSTTE) has biased composition (polar residues). 3 stretches are compositionally biased toward polar residues: residues 420–429 (NDELSASGSQ), 436–455 (GTNS…NSEP), and 493–505 (TAFS…STNH). Positions 610-806 (HNSHTVHTVV…HLYDILFLYG (197 aa)) constitute a Rab-GAP TBC domain. The helical transmembrane segment at 798-818 (LYDILFLYGPGILFNFGLALL) threads the bilayer.

This sequence belongs to the GYP5 family.

The protein localises to the membrane. The protein resides in the cytoplasm. Its function is as follows. GTPase-activating protein involved in ER to Golgi trafficking and polarized exocytosis. In Schizosaccharomyces pombe (strain 972 / ATCC 24843) (Fission yeast), this protein is GTPase activating protein Gyp51 (gyp51).